A 1077-amino-acid polypeptide reads, in one-letter code: Protein hairless (1077 aa).

Disordered regions lie at residues 14 to 75, 97 to 141, 269 to 322, 340 to 368, 408 to 504, 533 to 876, and 976 to 1077; these read NRQT…SNNN, SSTS…HAKT, PSAA…SRPR, TLGRAALRTAARKRRRPHEPLTTSEDQQP, IEKP…PKAK, TTTS…PTSN, and GQPA…LSKH. Low complexity-rich tracts occupy residues 26–75, 115–130, 269–286, and 293–308; these read NINS…SNNN, TTTPTTTTTPSSSSST, PSAATSATVTPTSAVTTA, and STSLSFSDDNSSIQSS. Composition is skewed to basic and acidic residues over residues 408 to 439 and 449 to 459; these read IEKPDTIKGEDDAERLEKEPKKAVSDDSESKE and QPKDETVDVEM. The segment covering 596–607 has biased composition (gly residues); that stretch reads GSGGASSGGAGG. Low complexity predominate over residues 640 to 684; the sequence is PGSSSSSTSPATLSTQPTRLNSSYSIHSLLGGSSGSGSSSFSSSG. The span at 704 to 713 shows a compositional bias: polar residues; the sequence is SMYQPSSSSY. 4 positions are modified to phosphoserine: Ser720, Ser723, Ser746, and Ser753. The span at 772–782 shows a compositional bias: polar residues; sequence PSTSGSASQDL. 2 stretches are compositionally biased toward low complexity: residues 783-798 and 811-829; these read SPPRSSPASPATTPRT and ASPSASSSSCPSPGDRSAS. The span at 837–846 shows a compositional bias: polar residues; sequence QQQPHLQRSS. Over residues 865 to 876 the composition is skewed to low complexity; the sequence is AGSPTSAPPTSN. The span at 984–995 shows a compositional bias: basic residues; the sequence is THPHLAHPHQHP. 2 stretches are compositionally biased toward low complexity: residues 996 to 1012 and 1023 to 1055; these read HPAALTTHHSPAHLATP and SATSSHRTASTSPSSSSASASSSAATSGASSSA. A compositionally biased stretch (polar residues) spans 1056 to 1070; it reads MFHTSSLRNEQSSDL.

As to expression, during embryogenesis expression is primarily in endo- and mesodermal cell layers. Ovary, embryos, larval and pupal imaginal disks.

The protein localises to the nucleus. Is a potent antagonist of neurogenic gene activity during sensory organ development. The expression of distinct cell fates by the trichogen (shaft) / tormogen (socket) sister cell pair depends on the level of H activity. A certain threshold level of H activity is required, below which both sister cells adopt the tormogen fate. The chain is Protein hairless (H) from Drosophila melanogaster (Fruit fly).